The chain runs to 82 residues: Nuclear protein 1 (82 aa).

The interval 1–82 (MATFPPATSA…SERKKRGARR (82 aa)) is disordered. The span at 17 to 28 (PEDEDSSLDESD) shows a compositional bias: acidic residues. Residues 65–82 (KLVTKLQNSERKKRGARR) carry the Nuclear localization signal motif.

It belongs to the NUPR family. In terms of assembly, monomer. Directly interacts with MSL1 and binds MORF4L1, two components of histone acetyltransferase complex; the interaction with MORF4L1 may be mediated by MSL1. Interacts with EP300; this interaction enhances the effect of EP300 on PAX2 transcription factor activity. Interacts with PAXIP1; this interaction prevents PAXIP1 inhibition of PAX2 transcription factor activity. Interacts with COPS5; this interaction allows COPS5-dependent CDKN1B nuclear to cytoplasm translocation. Interacts with RNF2. Interacts with FOXO3; this interaction represses FOXO3 transactivation. Interacts with PTMA; negatively regulates apoptotic process. Interacts with MYOD1, EP300 and DDX5; this interaction coordinates the association of anti-proliferative and pro-myogenic proteins at the myogenin promoter. Interacts with TP53; interaction is stress-dependent. Forms a complex with EP300 and TP53; this complex binds CDKN1A promoter leading to transcriptional induction of CDKN1A. Post-translationally, phosphorylated in vitro by PKA and CK. Phosphorylation promotes DNA-binding activity. Acetylated by EP300 in vitro. Widely expressed, with high levels in liver, pancreas, prostate, ovary, colon, thyroid, spinal cord, trachea and adrenal gland, moderate levels in heart, placenta, lung, skeletal muscle, kidney, testis, small intestine, stomach and lymph node, and low levels in brain, spleen, thymus and bone marrow. Not detected in peripheral blood leukocytes.

Its subcellular location is the nucleus. The protein resides in the cytoplasm. It localises to the perinuclear region. Transcription regulator that converts stress signals into a program of gene expression that empowers cells with resistance to the stress induced by a change in their microenvironment. Thereby participates in the regulation of many processes namely cell-cycle, apoptosis, autophagy and DNA repair responses. Controls cell cycle progression and protects cells from genotoxic stress induced by doxorubicin through the complex formation with TP53 and EP300 that binds CDKN1A promoter leading to transcriptional induction of CDKN1A. Protects pancreatic cancer cells from stress-induced cell death by binding the RELB promoter and activating its transcription, leading to IER3 transactivation. Negatively regulates apoptosis through interaction with PTMA. Inhibits autophagy-induced apoptosis in cardiac cells through FOXO3 interaction, inducing cytoplasmic translocation of FOXO3 thereby preventing the FOXO3 association with the pro-autophagic BNIP3 promoter. Inhibits cell growth and facilitates programmed cell death by apoptosis after adriamycin-induced DNA damage through transactivation of TP53. Regulates methamphetamine-induced apoptosis and autophagy through DDIT3-mediated endoplasmic reticulum stress pathway. Participates in DNA repair following gamma-irradiation by facilitating DNA access of the transcription machinery through interaction with MSL1 leading to inhibition of histone H4' Lys-16' acetylation (H4K16ac). Coactivator of PAX2 transcription factor activity, both by recruiting EP300 to increase PAX2 transcription factor activity and by binding PAXIP1 to suppress PAXIP1-induced inhibition on PAX2. Positively regulates cell cycle progression through interaction with COPS5 inducing cytoplasmic translocation of CDKN1B leading to the CDKN1B degradation. Coordinates, through its interaction with EP300, the assiociation of MYOD1, EP300 and DDX5 to the MYOG promoter, leading to inhibition of cell-cycle progression and myogenic differentiation promotion. Negatively regulates beta cell proliferation via inhibition of cell-cycle regulatory genes expression through the suppression of their promoter activities. Also required for LHB expression and ovarian maturation. Exacerbates CNS inflammation and demyelination upon cuprizone treatment. This chain is Nuclear protein 1, found in Homo sapiens (Human).